The primary structure comprises 53 residues: Zinc metalloproteinase-disintegrin-like alborhagin (53 aa).

The protein belongs to the venom metalloproteinase (M12B) family. P-III subfamily. P-IIIb sub-subfamily. As to quaternary structure, monomer. It depends on Zn(2+) as a cofactor. Contains numerous disulfide bonds. In terms of processing, glycosylated. Expressed by the venom gland.

The protein resides in the secreted. With respect to regulation, alborhagin-induced platelet aggregation, but not shape change, is inhibited by EDTA, suggesting that the platelet activation (shape change) is independent of divalent cation or metalloproteinase activity. Functionally, induces platelet activation and glycoprotein VI (GP6)-dependent platelet aggregation. Induces ectodomain cleavage of GP6 by activating endogenous platelet metalloproteinases (probably ADAM10). Has fibrinogenolytic activity against the alpha chain of fibrinogen (FGA). Recognizes distinct binding sites as convulxin, since alborhagin has minimal effect on convulxin binding to GPVI-expressing cells. Disintegrin alborhagin-C: 42 kDa fragment of alborhagin autoproteolysed that does not show platelet activation. The sequence is that of Zinc metalloproteinase-disintegrin-like alborhagin from Trimeresurus albolabris (White-lipped pit viper).